Here is a 96-residue protein sequence, read N- to C-terminus: Co-chaperonin GroES (96 aa).

It belongs to the GroES chaperonin family. In terms of assembly, heptamer of 7 subunits arranged in a ring. Interacts with the chaperonin GroEL.

Its subcellular location is the cytoplasm. Together with the chaperonin GroEL, plays an essential role in assisting protein folding. The GroEL-GroES system forms a nano-cage that allows encapsulation of the non-native substrate proteins and provides a physical environment optimized to promote and accelerate protein folding. GroES binds to the apical surface of the GroEL ring, thereby capping the opening of the GroEL channel. This is Co-chaperonin GroES from Polynucleobacter asymbioticus (strain DSM 18221 / CIP 109841 / QLW-P1DMWA-1) (Polynucleobacter necessarius subsp. asymbioticus).